Here is a 470-residue protein sequence, read N- to C-terminus: Adenosylhomocysteinase (470 aa).

Residues Thr61, Asp136, and Glu196 each contribute to the substrate site. Residue 197–199 (TTT) participates in NAD(+) binding. Substrate contacts are provided by Lys226 and Asp230. NAD(+)-binding positions include Asn231, 260 to 265 (GYGDVG), Glu283, Asn318, 339 to 341 (IGH), and Asn384.

The protein belongs to the adenosylhomocysteinase family. NAD(+) serves as cofactor.

It is found in the cytoplasm. It catalyses the reaction S-adenosyl-L-homocysteine + H2O = L-homocysteine + adenosine. It participates in amino-acid biosynthesis; L-homocysteine biosynthesis; L-homocysteine from S-adenosyl-L-homocysteine: step 1/1. Functionally, may play a key role in the regulation of the intracellular concentration of adenosylhomocysteine. The chain is Adenosylhomocysteinase from Aromatoleum aromaticum (strain DSM 19018 / LMG 30748 / EbN1) (Azoarcus sp. (strain EbN1)).